A 440-amino-acid polypeptide reads, in one-letter code: MPAALQRRSWVPAASEDHVLAIAADAAARDALGIAAEIERLADDNHRIHDREGLNLNPATNVMNPAAEALLSRGLGSRASLGYPGDKYEVGLEAIERIEVIAAELAAEVFGSKFAEVRVSSGALSNLYVFMATCRPGDTIIAPPPAIGGHVTHHAAGAAGLYGLKTVPAPVDADGYTVDAAALARLAREVKPKLITIGGSLNLFPHPVPAIREVADSVGAKLLFDAAHLSGMVAGKAWPQPLEEGAHAITMSTYKSLGGPAGGLIVSNDAALMERIDAIAYPGLTANSDAGRTAALARGLLDWKVHGRAYAAAMRETAQALAHALDAEGLPVFAKARGFTQSHQFALEAAHWGGGQRAAKKLAEGGLLACGIGLPIAPVEGDINGLRLGVPEIVRLGFTPDDMPQLASWIARALEGGGASVAAEVRERRTRLGGLRYIVR.

N6-(pyridoxal phosphate)lysine is present on lysine 255.

Belongs to the SHMT family. Alpha-methylserine aldolase subfamily. In terms of assembly, homodimer. It depends on pyridoxal 5'-phosphate as a cofactor.

The catalysed reaction is 2-methyl-L-serine = formaldehyde + L-alanine. Functionally, catalyzes the reversible interconversion of alpha-methyl-L-serine to L-alanine and formaldehyde. This Variovorax paradoxus protein is Alpha-methylserine aldolase.